Consider the following 186-residue polypeptide: Ribosome-recycling factor (186 aa).

Belongs to the RRF family.

It is found in the cytoplasm. Its function is as follows. Responsible for the release of ribosomes from messenger RNA at the termination of protein biosynthesis. May increase the efficiency of translation by recycling ribosomes from one round of translation to another. The polypeptide is Ribosome-recycling factor (Burkholderia lata (strain ATCC 17760 / DSM 23089 / LMG 22485 / NCIMB 9086 / R18194 / 383)).